Here is a 339-residue protein sequence, read N- to C-terminus: tRNA N6-adenosine threonylcarbamoyltransferase (339 aa).

Positions 111 and 115 each coordinate Fe cation. Residues 134–138 (LVSGG), Asp167, Gly180, and Asn270 contribute to the substrate site. Asp298 provides a ligand contact to Fe cation.

Belongs to the KAE1 / TsaD family. Fe(2+) is required as a cofactor.

The protein resides in the cytoplasm. It carries out the reaction L-threonylcarbamoyladenylate + adenosine(37) in tRNA = N(6)-L-threonylcarbamoyladenosine(37) in tRNA + AMP + H(+). Its function is as follows. Required for the formation of a threonylcarbamoyl group on adenosine at position 37 (t(6)A37) in tRNAs that read codons beginning with adenine. Is involved in the transfer of the threonylcarbamoyl moiety of threonylcarbamoyl-AMP (TC-AMP) to the N6 group of A37, together with TsaE and TsaB. TsaD likely plays a direct catalytic role in this reaction. The polypeptide is tRNA N6-adenosine threonylcarbamoyltransferase (Alkalilimnicola ehrlichii (strain ATCC BAA-1101 / DSM 17681 / MLHE-1)).